The primary structure comprises 561 residues: Solute carrier family 41 member 2 (561 aa).

Over Met1–Gln150 the chain is Extracellular. Residues Ile151–Ile171 traverse the membrane as a helical segment. The Cytoplasmic portion of the chain corresponds to Val172 to Glu183. The chain crosses the membrane as a helical span at residues Val184 to Ser204. Residues Arg205–Gln233 are Extracellular-facing. The chain crosses the membrane as a helical span at residues Val234–Pro254. Residues Asp255–Ser270 are Cytoplasmic-facing. The chain crosses the membrane as a helical span at residues Val271 to Gly291. Over Ser292–Asn301 the chain is Extracellular. The chain crosses the membrane as a helical span at residues Val302 to Ile322. At Ser323–Tyr333 the chain is on the cytoplasmic side. A helical membrane pass occupies residues Ala334 to Ile354. The Extracellular portion of the chain corresponds to Ala355–Val364. Residues Leu365–Ile385 form a helical membrane-spanning segment. Residues Leu386–Asn394 lie on the Cytoplasmic side of the membrane. The chain crosses the membrane as a helical span at residues Leu395–Ile415. Topologically, residues Gln416–Ala457 are extracellular. Residues Gln458–Met478 form a helical membrane-spanning segment. Over Lys479–Pro487 the chain is Cytoplasmic. A helical transmembrane segment spans residues Ile488 to Ala508. The Extracellular portion of the chain corresponds to Asp509–Thr531. Residues Ala532–Ile552 form a helical membrane-spanning segment. Topologically, residues Gly553 to Asp561 are cytoplasmic.

It belongs to the SLC41A transporter family.

It localises to the cell membrane. It carries out the reaction Mg(2+)(in) = Mg(2+)(out). It catalyses the reaction Mn(2+)(in) = Mn(2+)(out). The enzyme catalyses Co(2+)(in) = Co(2+)(out). The catalysed reaction is Ni(2+)(in) = Ni(2+)(out). It carries out the reaction Fe(2+)(in) = Fe(2+)(out). In terms of biological role, acts as a plasma-membrane magnesium transporter. Can also mediate the transport of other divalent metal cations in an order of Ba(2+) &gt; Ni(2+) &gt; Co(2+) &gt; Fe(2+) &gt; Mn(2+). This chain is Solute carrier family 41 member 2 (slc41a2), found in Xenopus laevis (African clawed frog).